A 206-amino-acid polypeptide reads, in one-letter code: Small ribosomal subunit protein uS4 (206 aa).

An S4 RNA-binding domain is found at 98 to 176; that stretch reads RRLDNVVYRL…APKWLEANRE (79 aa).

Belongs to the universal ribosomal protein uS4 family. In terms of assembly, part of the 30S ribosomal subunit. Contacts protein S5. The interaction surface between S4 and S5 is involved in control of translational fidelity.

Its function is as follows. One of the primary rRNA binding proteins, it binds directly to 16S rRNA where it nucleates assembly of the body of the 30S subunit. In terms of biological role, with S5 and S12 plays an important role in translational accuracy. This is Small ribosomal subunit protein uS4 from Gloeobacter violaceus (strain ATCC 29082 / PCC 7421).